A 352-amino-acid chain; its full sequence is Holliday junction branch migration complex subunit RuvB (352 aa).

Residues 13–201 form a large ATPase domain (RuvB-L) region; that stretch reads FSFRKKELRL…FGISQKIEFY (189 aa). ATP-binding positions include Arg-41, Gly-82, Lys-85, Thr-86, Thr-87, 148 to 150, Arg-191, Tyr-201, and Arg-238; that span reads EDF. Thr-86 contributes to the Mg(2+) binding site. The small ATPAse domain (RuvB-S) stretch occupies residues 202–273; the sequence is TCDELKQIIV…LIKKALNSYQ (72 aa). The head domain (RuvB-H) stretch occupies residues 276–352; the sequence is EKGLDSLDRH…KYIDSKDDNF (77 aa). DNA is bound by residues Arg-330 and Arg-335.

It belongs to the RuvB family. Homohexamer. Forms an RuvA(8)-RuvB(12)-Holliday junction (HJ) complex. HJ DNA is sandwiched between 2 RuvA tetramers; dsDNA enters through RuvA and exits via RuvB. An RuvB hexamer assembles on each DNA strand where it exits the tetramer. Each RuvB hexamer is contacted by two RuvA subunits (via domain III) on 2 adjacent RuvB subunits; this complex drives branch migration. In the full resolvosome a probable DNA-RuvA(4)-RuvB(12)-RuvC(2) complex forms which resolves the HJ.

It localises to the cytoplasm. The enzyme catalyses ATP + H2O = ADP + phosphate + H(+). In terms of biological role, the RuvA-RuvB-RuvC complex processes Holliday junction (HJ) DNA during genetic recombination and DNA repair, while the RuvA-RuvB complex plays an important role in the rescue of blocked DNA replication forks via replication fork reversal (RFR). RuvA specifically binds to HJ cruciform DNA, conferring on it an open structure. The RuvB hexamer acts as an ATP-dependent pump, pulling dsDNA into and through the RuvAB complex. RuvB forms 2 homohexamers on either side of HJ DNA bound by 1 or 2 RuvA tetramers; 4 subunits per hexamer contact DNA at a time. Coordinated motions by a converter formed by DNA-disengaged RuvB subunits stimulates ATP hydrolysis and nucleotide exchange. Immobilization of the converter enables RuvB to convert the ATP-contained energy into a lever motion, pulling 2 nucleotides of DNA out of the RuvA tetramer per ATP hydrolyzed, thus driving DNA branch migration. The RuvB motors rotate together with the DNA substrate, which together with the progressing nucleotide cycle form the mechanistic basis for DNA recombination by continuous HJ branch migration. Branch migration allows RuvC to scan DNA until it finds its consensus sequence, where it cleaves and resolves cruciform DNA. The sequence is that of Holliday junction branch migration complex subunit RuvB from Prochlorococcus marinus (strain AS9601).